We begin with the raw amino-acid sequence, 473 residues long: Ornithine aminotransferase, mitochondrial (473 aa).

A mitochondrion-targeting transit peptide spans 1–32 (MAAALARRGGGGLARALARGRGMCSATAAERA). The residue at position 293 (K293) is an N6-(pyridoxal phosphate)lysine.

The protein belongs to the class-III pyridoxal-phosphate-dependent aminotransferase family. As to quaternary structure, homotetramer. Requires pyridoxal 5'-phosphate as cofactor.

The protein localises to the mitochondrion matrix. The catalysed reaction is a 2-oxocarboxylate + L-ornithine = L-glutamate 5-semialdehyde + an L-alpha-amino acid. Its pathway is amino-acid biosynthesis; L-proline biosynthesis; L-glutamate 5-semialdehyde from L-ornithine: step 1/1. Confers drought and oxidative stress tolerance mainly through enhancing ROS-scavenging capacity and Pro pre-accumulation. The protein is Ornithine aminotransferase, mitochondrial (OAT) of Oryza sativa subsp. japonica (Rice).